The chain runs to 160 residues: Small ribosomal subunit protein uS9 (160 aa).

Residues 1 to 18 (MTDTSNSLQDLGTLTGAP) are compositionally biased toward polar residues. Residues 1–37 (MTDTSNSLQDLGTLTGAPSAQPVKSVEPKIDAQGRAY) form a disordered region.

The protein belongs to the universal ribosomal protein uS9 family.

This is Small ribosomal subunit protein uS9 from Hyphomonas neptunium (strain ATCC 15444).